Here is a 372-residue protein sequence, read N- to C-terminus: E3 ubiquitin-protein ligase RNF34 (372 aa).

An FYVE-type zinc finger spans residues glutamate 56–glutamate 107. The SAP 1 domain occupies leucine 115–isoleucine 134. Phosphoserine is present on serine 169. A disordered region spans residues glutamine 194–alanine 253. Over residues aspartate 201–asparagine 220 the composition is skewed to polar residues. Residues threonine 221–alanine 239 show a composition bias toward acidic residues. The segment covering glutamate 240 to arginine 252 has biased composition (basic and acidic residues). Residues serine 254 and serine 256 each carry the phosphoserine modification. An SAP 2 domain is found at valine 264–arginine 278. An RING-type zinc finger spans residues cysteine 325–arginine 360.

In terms of assembly, interacts with CASP8 and CASP10. Interacts (via RING-type zinc finger) with PPARGC1A. Interacts with NOD1. Interacts with p53/TP53; involved in p53/TP53 ubiquitination. Interacts (via RING-type zinc finger) with MDM2; the interaction stabilizes MDM2. Autoubiquitinated (in vitro). In terms of processing, proteolytically cleaved by caspases upon induction of apoptosis by TNF. Ubiquitous. Detected in heart, brain, liver, skeletal muscle, kidney, pancreas, spleen, thymus, prostate, testis, ovary, colon and leukocytes.

The protein resides in the cell membrane. The protein localises to the endomembrane system. Its subcellular location is the nucleus. It localises to the nucleus speckle. It is found in the cytoplasm. The protein resides in the cytosol. The enzyme catalyses S-ubiquitinyl-[E2 ubiquitin-conjugating enzyme]-L-cysteine + [acceptor protein]-L-lysine = [E2 ubiquitin-conjugating enzyme]-L-cysteine + N(6)-ubiquitinyl-[acceptor protein]-L-lysine.. Its pathway is protein modification; protein ubiquitination. Its function is as follows. E3 ubiquitin-protein ligase that regulates several biological processes through the ubiquitin-mediated proteasomal degradation of various target proteins. Ubiquitinates the caspases CASP8 and CASP10, promoting their proteasomal degradation, to negatively regulate cell death downstream of death domain receptors in the extrinsic pathway of apoptosis. May mediate 'Lys-48'-linked polyubiquitination of RIPK1 and its subsequent proteasomal degradation thereby indirectly regulating the tumor necrosis factor-mediated signaling pathway. Negatively regulates p53/TP53 through its direct ubiquitination and targeting to proteasomal degradation. Indirectly, may also negatively regulate p53/TP53 through ubiquitination and degradation of SFN. Mediates PPARGC1A proteasomal degradation probably through ubiquitination thereby indirectly regulating the metabolism of brown fat cells. Possibly involved in innate immunity, through 'Lys-48'-linked polyubiquitination of NOD1 and its subsequent proteasomal degradation. In Homo sapiens (Human), this protein is E3 ubiquitin-protein ligase RNF34.